The chain runs to 359 residues: Outer membrane protein A (359 aa).

The first 21 residues, 1-21 (MKKTAIALAVALAGFATVAQA), serve as a signal peptide directing secretion. 8 consecutive transmembrane segments (beta stranded) span residues 27-37 (TWYTGAKLGWS), 62-73 (QLGAGAFLGYQA), 77-85 (LGFELGYDW), 103-114 (QGVQLAAKLSYP), 119-127 (LDIYTRLGG), 154-163 (PLAAVGVEYA), 168-175 (WATRLDYQ), and 194-202 (MLSLGVSYR). 5 consecutive repeat copies span residues 210–211 (AP), 212–213 (AP), 214–215 (AP), 216–217 (AP), and 218–219 (AP). The tract at residues 210-219 (APAPAPAPAP) is 5 X 2 AA tandem repeats of A-P. Positions 221–351 (VETKRFTLKS…RVEIEVKGIK (131 aa)) constitute an OmpA-like domain. A disulfide bridge links Cys-322 with Cys-336.

It belongs to the outer membrane OOP (TC 1.B.6) superfamily. OmpA family. In terms of assembly, monomer and homodimer.

Its subcellular location is the cell outer membrane. Functionally, with TolR probably plays a role in maintaining the position of the peptidoglycan cell wall in the periplasm. Acts as a porin with low permeability that allows slow penetration of small solutes; an internal gate slows down solute passage. This chain is Outer membrane protein A, found in Serratia marcescens.